The sequence spans 473 residues: Inactive levansucrase (473 aa).

The N-terminal stretch at 1 to 29 (MNIKKFAKQATVLTFTTALLAGGATQAFA) is a signal peptide.

The protein belongs to the glycosyl hydrolase 68 family.

It is found in the secreted. The chain is Inactive levansucrase (sacB) from Geobacillus stearothermophilus (Bacillus stearothermophilus).